The chain runs to 1365 residues: MTLPQAQLDFFTTATSMLEWHYNLERNKPGLLELTGVSQHGRATMSGLNDYDYQSLSFLKSDRTHNLQQMRTVTKSAIPNEILEHFKHIKCHCTMGLFPEIGRAWLTIDSEIYIWTFNQTRDVAYYDGLSHLIVSVGLVKPKPGVFVQDVKYLLVLTTPIEVIVLGVTFGESSYNEMQLMNRPVFVIGTDNVSISVIKGTDDGRIFLGGRDGCLYEIYYQAESSWFGKRCKKINLSQGLVSYMVPSFLKVFSEVDPIEHIEIDNSRKLLYVLTEKGVIEAWDISTSYTTARRLGRITQNDITNQAVSLITTVDPSIFKSVKAICPLSADDADKLHLVAVTQCGVRLFFSTTSLNVKQQFGPAVPCSPGENTGFGQPAVQPPLSPNAEAPKGLYLLHVRLPPGYTPNATTNKPKQVHAAHYTEGTMLMITTQQHEQDLLWSLSSAPSVNFTYLVESTALESLDGVVWGLAEVHEPSTPQRKSPLNSARHARKVALLTNQGTHIIEVLKMVDVLRQILLSCNGPHHEEVKMFFQSQNQREACVTALLLATSDTYRGSDVALWAAQAFMLYGGEPCYQHQKFLNASNRNMANQTLGPNTTNVRERQSMFMSTPMPNSVANSPVGFPGSQFNQPISPIGNMQPPQVAVSNENSPIVFSAKHDGLYMYVSRMLHSVWQMRCVNEQFCSNLSQSECALLLSDLRSLRSFLEVHSVHDISSTTRVSFDNHLDRTNSYNTIMMGNTLLPIPEQRVLSEQAQVEETRSLSALNLFVKHACEVISLWNILNSHSFQLICVQLSPEHQKLLTCSTFRDLLITRSEVCAFLIISLINLYLKDAAGVSEVSKNLRENCPNLYRHEDDVTYKATELLMNAKNCTSATEKEHMLRTTLHMCKEAAPTLPLHSICMQFISADFFEGVIELSAVCASKSDPEEVGVHFYNNGEPADDREGYTCFATRMAYYKEVQLMLDHIYQRVCNKTHVQDKSINPLKGTAKASDAKNGATQTIPKIVAHTLKVKDPLIHITLYEWLLAHDMLKELLDVVEPSLGEFLRRSVSQNVDNVVLIDLLWKYYEKNSHHSQAAHILDNLAMTRSENINLEQRIEYLVRAVMCMRNGNVGSSLSNGIFLKELEDKLDIARVQKSVLAAMTELASDKLEAATAVKELNYALYDITQLYQHFAEPFDLWECQLSILNCSHHNDPLLIESVWGQIINSVVDKPGTTSERCNRLFTKIEILVREYGESGVCFPFAFLIRELEVKACQLRFPEGIVPEKLVSMNLDIELLLEYYSRMISMNERVWANEGNEWHLIQSVIRVVSLLADNAQSIWYRSKRRIVGKAQDIVAGCLNICYQKPDTNRLQHSLKELQSQLQRLLI.

The interval 1 to 508 is required for binding to Nup93-1 and anchoring to the nuclear pore complex; sequence MTLPQAQLDF…GTHIIEVLKM (508 aa). Positions 508 to 986 are required for binding to chromatin; sequence MVDVLRQILL…KSINPLKGTA (479 aa).

It belongs to the non-repetitive/WGA-negative nucleoporin family. As to quaternary structure, interacts (via N-terminus) with Nup93-1. Interacts with Nup35. Interacts with cup.

The protein resides in the nucleus. It localises to the nuclear pore complex. It is found in the chromosome. Its subcellular location is the nucleus membrane. The protein localises to the cytoplasm. Its function is as follows. Component of the nuclear pore complex. Has a role in the organization of the inner nuclear membrane proteins at the nuclear envelope. In germ cells, plays a role in the nuclear localization of components of the dpp signaling pathways, such as Medea and phosphorylated Mad. Binds to chromatin, and together with Nup62 and Nup93-1, contributes to karyosome morphology and chromatin organization including attachment to the nuclear envelope in oocytes and nurse cells. Has a role in female fertility including egg chamber development; in nurse cells, has a role in the organization of F-actin in subcortical and cytoplasmic actin filaments important for the transfer of cytoplasm from nurse cells to the growing oocytes. Has a role in male spermatogenesis and fertility. Has a role in germ line cell proliferation. In Drosophila melanogaster (Fruit fly), this protein is Nuclear pore complex protein Nup154.